The primary structure comprises 80 residues: SPbeta prophage-derived uncharacterized HTH-type transcriptional regulator YotL (80 aa).

One can recognise an HTH cro/C1-type domain in the interval 12-67 (LNELMHEYSVSIEDLVECTGLSKQRINDYVGGFKSNMNIGTAMTFADAIGCSIEEL). The segment at residues 23–42 (IEDLVECTGLSKQRINDYVG) is a DNA-binding region (H-T-H motif).

In Bacillus subtilis (strain 168), this protein is SPbeta prophage-derived uncharacterized HTH-type transcriptional regulator YotL (yotL).